Consider the following 143-residue polypeptide: Transcriptional regulator MraZ (143 aa).

SpoVT-AbrB domains are found at residues 5–47 and 76–119; these read THTP…PRAE and TDEQ…DAQA.

It belongs to the MraZ family. Forms oligomers.

Its subcellular location is the cytoplasm. It localises to the nucleoid. The sequence is that of Transcriptional regulator MraZ from Mycobacterium leprae (strain Br4923).